Consider the following 215-residue polypeptide: MNLLIMGLPGAGKGTQAEFIVKNYGVNHISTGDMFRAAMKNETEMGKLAKSFIDKGELVPDEVTNGIVKERLAQDDIKASGFLLDGYPRTIDQAHALDTMLEELGIKLDAVVNIVVNPNILVDRLSGRYICRNCGATYHKIFNPTKVEGTCDVCGSHDLYQRADDVPETVKNRLDVNIKESAPIIEHYTELGLVKNIEGEQEISQVTDDIKKVLG.

An ATP-binding site is contributed by 10 to 15 (GAGKGT). The tract at residues 30-59 (STGDMFRAAMKNETEMGKLAKSFIDKGELV) is NMP. AMP contacts are provided by residues Thr31, Arg36, 57-59 (ELV), 86-89 (GYPR), and Gln93. The tract at residues 127–165 (GRYICRNCGATYHKIFNPTKVEGTCDVCGSHDLYQRADD) is LID. Arg128 provides a ligand contact to ATP. Zn(2+)-binding residues include Cys131 and Cys134. 137–138 (TY) contributes to the ATP binding site. Cys151 and Cys154 together coordinate Zn(2+). Residues Arg162 and Arg173 each coordinate AMP. Gln201 contributes to the ATP binding site.

This sequence belongs to the adenylate kinase family. As to quaternary structure, monomer.

The protein localises to the cytoplasm. It catalyses the reaction AMP + ATP = 2 ADP. The protein operates within purine metabolism; AMP biosynthesis via salvage pathway; AMP from ADP: step 1/1. In terms of biological role, catalyzes the reversible transfer of the terminal phosphate group between ATP and AMP. Plays an important role in cellular energy homeostasis and in adenine nucleotide metabolism. This chain is Adenylate kinase, found in Lactococcus lactis subsp. cremoris (strain SK11).